The chain runs to 549 residues: Cell death protein 4 (549 aa).

The region spanning 1 to 91 is the CARD domain; sequence MLCEIECRAL…HLADFLEDYI (91 aa). ATP is bound by residues tyrosine 131, glycine 162, glycine 164, lysine 165, serine 166, valine 167, arginine 273, threonine 367, and tyrosine 369. In terms of domain architecture, NB-ARC spans 133 to 417; the sequence is REYHVDRVIK…KLWSCVIPVD (285 aa). Serine 166 lines the Mg(2+) pocket.

As to quaternary structure, associates as an asymmetric homodimer with ced-9. Only one ced-4 molecule within the dimer interacts directly with ced-9. Upon release from ced-9, forms a multimer, known as the apoptosome, and interacts with ced-3; the interaction results in ced-3 autoproteolytic cleavage and activation. Multiple oligomeric states of the apoptosome are observed including hexamers, heptamers and octamers. The hexamers likely represent a pre-mature state of the apoptosome and may contribute to the regulation of ced-3 activation. The apoptosome multimer also interacts with two processed ced-3 to form a stable holoenzyme. Interacts with sex-determining protein fem-1. May form a complex composed of ced-3, ced-4 and mac-1 or of ced-9, ced-4 and mac-1. Within the complex, interacts with mac-1.

The protein resides in the mitochondrion. The protein localises to the cytoplasm. It localises to the perinuclear region. Component of the egl-1, ced-9, ced-4 and ced-3 apoptotic signaling cascade required for the initiation of programmed cell death in cells fated to die during embryonic and postembryonic development. During oogenesis, required for germline apoptosis downstream of ced-9 and upstream of ced-3 but independently of egl-1. May regulate germline apoptosis in response to DNA damage, probably downstream of let-60/ras and mpk-1 pathway. Regulates CEP neuron apoptosis in response to high Al(3+) levels. During male tail morphogenesis, promotes apoptosis of the tail-spike cell upstream of ced-3 but independently of egl-1 and ced-9. May play a role in sex-specific cell apoptosis, probably by promoting ced-3-mediated cleavage of sex-determining protein fem-1. During larval development, required for the elimination of transient presynaptic components downstream of egl-1 and ced-9 and upstream of ced-3 apoptotic pathway. Downstream of calreticulin crt-1 and upstream of ced-3 and independently of egl-1 and ced-9, plays a role in the initial steps of axonal regrowth following axotomy. Together with ain-1, a component of the miRNA-induced-silencing complex (miRISC), and probably upstream of ced-3, regulates temporal cell fate patterning during larval development. May play a role in resistance to S.typhimurium-mediated infection. Functionally, plays a major role in programmed cell death. egl-1 binds to and directly inhibits the activity of ced-9, releasing the cell death activator ced-4 from a ced-9/ced-4-containing protein complex and allowing ced-4 to induce caspase ced-3 autoproteolytic cleavage and activation. Also forms a holoenzyme with processed ced-3 enhancing ced-3 activity. In terms of biological role, prevents programmed cell death. This is Cell death protein 4 (ced-4) from Caenorhabditis elegans.